The chain runs to 448 residues: tRNA modification GTPase MnmE (448 aa).

(6S)-5-formyl-5,6,7,8-tetrahydrofolate contacts are provided by R24, E81, and K120. The region spanning 216 to 373 is the TrmE-type G domain; sequence GLNVVLVGAP…LKRTLLREAG (158 aa). N226 is a binding site for K(+). Residues 226-231, 245-251, and 270-273 each bind GTP; these read NVGKSS, TDIAGTT, and DTAG. S230 is a Mg(2+) binding site. T245, I247, and T250 together coordinate K(+). T251 lines the Mg(2+) pocket. K448 is a (6S)-5-formyl-5,6,7,8-tetrahydrofolate binding site.

This sequence belongs to the TRAFAC class TrmE-Era-EngA-EngB-Septin-like GTPase superfamily. TrmE GTPase family. As to quaternary structure, homodimer. Heterotetramer of two MnmE and two MnmG subunits. It depends on K(+) as a cofactor.

It is found in the cytoplasm. Its function is as follows. Exhibits a very high intrinsic GTPase hydrolysis rate. Involved in the addition of a carboxymethylaminomethyl (cmnm) group at the wobble position (U34) of certain tRNAs, forming tRNA-cmnm(5)s(2)U34. The chain is tRNA modification GTPase MnmE from Neisseria meningitidis serogroup C (strain 053442).